Consider the following 287-residue polypeptide: Phospholipid phosphatase 2 (287 aa).

Residues 1–4 are Cytoplasmic-facing; the sequence is MERR. The helical transmembrane segment at 5–25 threads the bilayer; it reads WVFVLLDVLCVLVAALPCAIL. Over 26 to 51 the chain is Lumenal; the sequence is TFVNTPYKRGFYCGDDSIRYPYRPDT. Residues 52-72 form a helical membrane-spanning segment; the sequence is ITHGLMAGVIITATVILVSAG. Residues 73-87 are Cytoplasmic-facing; sequence EAYLVYTDRLYSRSD. The chain crosses the membrane as a helical span at residues 88–108; that stretch reads FNNYLAALYKVVGTFLFGAAV. At 109–161 the chain is on the lumenal side; that stretch reads SQSLTDLAKYMTGRLRPNFLAVCDPDWSRVNCSAYVQVEVCRGSSANVTESRL. Residues 117–125 form a phosphatase sequence motif I region; that stretch reads KYMTGRLRP. Residues Asn139 and Asn155 are each glycosylated (N-linked (GlcNAc...) asparagine). The helical transmembrane segment at 162-182 threads the bilayer; sequence SFYSGHSSFGMYCMVFLALYV. A phosphatase sequence motif II region spans residues 164-167; it reads YSGH. The active-site Proton donors is the His167. At 183–193 the chain is on the cytoplasmic side; sequence QARLCWKWARL. The chain crosses the membrane as a helical span at residues 194–211; sequence LRPTVQFFLVAFALYVGY. The Lumenal segment spans residues 212 to 218; that stretch reads TRVSDHK. A phosphatase sequence motif III region spans residues 212–223; it reads TRVSDHKHHWSD. Residue His219 is the Nucleophile of the active site. The helical transmembrane segment at 219-239 threads the bilayer; sequence HHWSDVLVGLLQGALVASLTV. Residues 240–287 are Cytoplasmic-facing; it reads RYISDFFKARPPQHCPEEEDLERKPSLSLTLALGETDCNHYGYPVSSS.

The protein belongs to the PA-phosphatase related phosphoesterase family. Forms functional homodimers and homooligomers. Can also form heterooligomers with PLPP1 and PLPP3. Post-translationally, N-glycosylated.

It localises to the membrane. The protein resides in the cell membrane. It is found in the early endosome membrane. Its subcellular location is the endoplasmic reticulum membrane. The catalysed reaction is a 1,2-diacyl-sn-glycero-3-phosphate + H2O = a 1,2-diacyl-sn-glycerol + phosphate. It catalyses the reaction 1,2-dihexadecanoyl-sn-glycero-3-phosphate + H2O = 1,2-dihexadecanoyl-sn-glycerol + phosphate. It carries out the reaction 1,2-di-(9Z-octadecenoyl)-sn-glycero-3-phosphate + H2O = 1,2-di-(9Z-octadecenoyl)-sn-glycerol + phosphate. The enzyme catalyses a monoacyl-sn-glycero-3-phosphate + H2O = a monoacylglycerol + phosphate. The catalysed reaction is (9Z)-octadecenoyl-sn-glycero-3-phosphate + H2O = (9Z-octadecenoyl)-glycerol + phosphate. It catalyses the reaction sphing-4-enine 1-phosphate + H2O = sphing-4-enine + phosphate. It carries out the reaction an N-acylsphing-4-enine 1-phosphate + H2O = an N-acylsphing-4-enine + phosphate. The enzyme catalyses N-(octanoyl)-sphing-4-enine-1-phosphate + H2O = N-octanoylsphing-4-enine + phosphate. The catalysed reaction is N-(9Z-octadecenoyl)-ethanolamine phosphate + H2O = N-(9Z-octadecenoyl) ethanolamine + phosphate. Its pathway is lipid metabolism; phospholipid metabolism. Magnesium-independent phospholipid phosphatase. Insensitive to N-ethylmaleimide. Its function is as follows. Magnesium-independent phospholipid phosphatase that catalyzes the dephosphorylation of a variety of glycerolipid and sphingolipid phosphate esters including phosphatidate/PA, lysophosphatidate/LPA, sphingosine 1-phosphate/S1P and ceramide 1-phosphate/C1P. Has no apparent extracellular phosphatase activity and therefore most probably acts intracellularly. Also acts on N-oleoyl ethanolamine phosphate/N-(9Z-octadecenoyl)-ethanolamine phosphate, a potential physiological compound. Through dephosphorylation of these bioactive lipid mediators produces new bioactive compounds and may regulate signal transduction in different cellular processes. Indirectly regulates, for instance, cell cycle G1/S phase transition through its phospholipid phosphatase activity. In Bos taurus (Bovine), this protein is Phospholipid phosphatase 2.